Here is a 184-residue protein sequence, read N- to C-terminus: Regulatory protein RecX (184 aa).

The segment at 1-21 is disordered; that stretch reads MTLFPLPSTSDPAEADESTKR.

This sequence belongs to the RecX family.

The protein resides in the cytoplasm. Modulates RecA activity. The sequence is that of Regulatory protein RecX from Mycolicibacterium vanbaalenii (strain DSM 7251 / JCM 13017 / BCRC 16820 / KCTC 9966 / NRRL B-24157 / PYR-1) (Mycobacterium vanbaalenii).